The sequence spans 735 residues: Delta-1-pyrroline-5-carboxylate synthase 2 (735 aa).

The tract at residues 1–315 (MGRGGIGGAG…WGCSKEATAR (315 aa)) is glutamate 5-kinase. Residues Ser79, Asp176, and Asn195 each contribute to the substrate site. Residues 215–216 (SD), 221–226 (YSGPPS), and 255–261 (RGGMQAK) each bind ATP. The tract at residues 316 to 735 (EMAVAARDCS…VYTHRELPLQ (420 aa)) is gamma-glutamyl phosphate reductase.

It in the N-terminal section; belongs to the glutamate 5-kinase family. This sequence in the C-terminal section; belongs to the gamma-glutamyl phosphate reductase family.

The catalysed reaction is L-glutamate + ATP = L-glutamyl 5-phosphate + ADP. It carries out the reaction L-glutamate 5-semialdehyde + phosphate + NADP(+) = L-glutamyl 5-phosphate + NADPH + H(+). It participates in amino-acid biosynthesis; L-proline biosynthesis; L-glutamate 5-semialdehyde from L-glutamate: step 1/2. It functions in the pathway amino-acid biosynthesis; L-proline biosynthesis; L-glutamate 5-semialdehyde from L-glutamate: step 2/2. Its activity is regulated as follows. Feedback regulated by proline. In terms of biological role, P5CS plays a key role in proline biosynthesis, leading to osmoregulation in plants. Involved in abiotic stress tolerance. The polypeptide is Delta-1-pyrroline-5-carboxylate synthase 2 (Oryza sativa subsp. japonica (Rice)).